A 135-amino-acid chain; its full sequence is Probable histone H2A.2 (135 aa).

The protein belongs to the histone H2A family. In terms of assembly, the nucleosome is a histone octamer containing two molecules each of H2A, H2B, H3 and H4 assembled in one H3-H4 heterotetramer and two H2A-H2B heterodimers. The octamer wraps approximately 147 bp of DNA.

Its subcellular location is the nucleus. The protein resides in the chromosome. Functionally, core component of nucleosome. Nucleosomes wrap and compact DNA into chromatin, limiting DNA accessibility to the cellular machineries which require DNA as a template. Histones thereby play a central role in transcription regulation, DNA repair, DNA replication and chromosomal stability. DNA accessibility is regulated via a complex set of post-translational modifications of histones, also called histone code, and nucleosome remodeling. The polypeptide is Probable histone H2A.2 (Oryza sativa subsp. indica (Rice)).